The following is a 288-amino-acid chain: Small ribosomal subunit protein uS2 (288 aa).

A disordered region spans residues 255 to 288 (ANNRDHKNNKNNSTIDNAENLKEENLVGGSNNES).

This sequence belongs to the universal ribosomal protein uS2 family.

In Ehrlichia chaffeensis (strain ATCC CRL-10679 / Arkansas), this protein is Small ribosomal subunit protein uS2.